The chain runs to 247 residues: Probable transcriptional regulatory protein Syncc9605_2132 (247 aa).

This sequence belongs to the TACO1 family.

It localises to the cytoplasm. The protein is Probable transcriptional regulatory protein Syncc9605_2132 of Synechococcus sp. (strain CC9605).